The sequence spans 316 residues: MNDVSKASLPKAIFLMGPTASGKTALAIELRKVLPVELISVDSALIYRGMDIGTAKPNADELKAAPHRLLDIRDPSQAYSAADFRRDALAQMAEITSAGRIPLLVGGTMLYFKALLEGLSPLPSADPEVRSRIEQQAAELGWEALHQQLQEIDPVAAARIHPNDPQRLSRALEVFFISGKTLTELTQTSGDALPYQVHQFAIAPASRELLHQRIELRFHQMLASGFEAEVRALFARGDLHTDLPSIRCVGYRQMWSYIEGEISYDEMVYRGVCATRQLAKRQMTWLRGWEGVRWLDSENPDRARKEVLQVVGAIAD.

17–24 (GPTASGKT) provides a ligand contact to ATP. Position 19 to 24 (19 to 24 (TASGKT)) interacts with substrate. 3 interaction with substrate tRNA regions span residues 42–45 (DSAL), 166–170 (QRLSR), and 247–252 (RCVGYR).

The protein belongs to the IPP transferase family. Monomer. Requires Mg(2+) as cofactor.

The enzyme catalyses adenosine(37) in tRNA + dimethylallyl diphosphate = N(6)-dimethylallyladenosine(37) in tRNA + diphosphate. In terms of biological role, catalyzes the transfer of a dimethylallyl group onto the adenine at position 37 in tRNAs that read codons beginning with uridine, leading to the formation of N6-(dimethylallyl)adenosine (i(6)A). The protein is tRNA dimethylallyltransferase of Salmonella enteritidis PT4 (strain P125109).